The primary structure comprises 302 residues: Glycine--tRNA ligase alpha subunit (302 aa).

It belongs to the class-II aminoacyl-tRNA synthetase family. Tetramer of two alpha and two beta subunits.

The protein resides in the cytoplasm. The enzyme catalyses tRNA(Gly) + glycine + ATP = glycyl-tRNA(Gly) + AMP + diphosphate. In Haemophilus influenzae (strain PittGG), this protein is Glycine--tRNA ligase alpha subunit.